Here is a 224-residue protein sequence, read N- to C-terminus: Ribonuclease T (224 aa).

A compositionally biased stretch (acidic residues) spans 1-11; sequence MSEDLYEDDLD. Residues 1-22 are disordered; that stretch reads MSEDLYEDDLDTQGSSGPRHPM. Residues 32 to 206 form the Exonuclease domain; the sequence is VVVDVETGGF…YDTEKTAELF (175 aa). D35, E37, H193, and D198 together coordinate Mg(2+). Catalysis depends on H193, which acts as the Proton donor/acceptor.

This sequence belongs to the RNase T family. In terms of assembly, homodimer. Mg(2+) is required as a cofactor.

Its function is as follows. Trims short 3' overhangs of a variety of RNA species, leaving a one or two nucleotide 3' overhang. Responsible for the end-turnover of tRNA: specifically removes the terminal AMP residue from uncharged tRNA (tRNA-C-C-A). Also appears to be involved in tRNA biosynthesis. This chain is Ribonuclease T, found in Pseudomonas putida (strain ATCC 700007 / DSM 6899 / JCM 31910 / BCRC 17059 / LMG 24140 / F1).